The chain runs to 187 residues: Casparian strip membrane protein 5 (187 aa).

Residues 1 to 24 (MKSGQAEIMETSKGIQKSGLMSRR) lie on the Cytoplasmic side of the membrane. Residues 25–45 (IAILEFILRIVAFFNTIGSAI) form a helical membrane-spanning segment. The Extracellular segment spans residues 46–74 (LMGTTHETLPFFTQFIRFQAEYNDLPALT). The chain crosses the membrane as a helical span at residues 75–95 (FFVVANAVVSGYLILSLTLAF). Topologically, residues 96–107 (VHIVKRKTQNTR) are cytoplasmic. A helical transmembrane segment spans residues 108 to 128 (ILLIILDVAMLGLLTSGASSA). Residues 129–161 (AAIVYLAHNGNNKTNWFAICQQFNSFCERISGS) lie on the Extracellular side of the membrane. N-linked (GlcNAc...) asparagine glycosylation occurs at N140. A helical membrane pass occupies residues 162-182 (LIGSFIAIVLLILLILLSAIA). Topologically, residues 183-187 (LSRRH) are cytoplasmic.

The protein belongs to the Casparian strip membrane proteins (CASP) family. Homodimer and heterodimers with other CASP proteins. Interacts with CASP1, CASP3 and CASP4.

It is found in the cell membrane. Regulates membrane-cell wall junctions and localized cell wall deposition. Required for establishment of the Casparian strip membrane domain (CSD) and the subsequent formation of Casparian strips, a cell wall modification of the root endodermis that determines an apoplastic barrier between the intraorganismal apoplasm and the extraorganismal apoplasm and prevents lateral diffusion. This Arabidopsis thaliana (Mouse-ear cress) protein is Casparian strip membrane protein 5 (CASP5).